A 344-amino-acid polypeptide reads, in one-letter code: Succinylglutamate desuccinylase (344 aa).

The Zn(2+) site is built by histidine 63, glutamate 66, and histidine 160. Glutamate 224 is an active-site residue.

The protein belongs to the AspA/AstE family. Succinylglutamate desuccinylase subfamily. Zn(2+) is required as a cofactor.

The catalysed reaction is N-succinyl-L-glutamate + H2O = L-glutamate + succinate. It participates in amino-acid degradation; L-arginine degradation via AST pathway; L-glutamate and succinate from L-arginine: step 5/5. Transforms N(2)-succinylglutamate into succinate and glutamate. This is Succinylglutamate desuccinylase from Shewanella sp. (strain MR-7).